The sequence spans 288 residues: Syntaxin PEP12 (288 aa).

Residues 1–268 (MSEDEFFGGD…RYQKRTSRWR (268 aa)) lie on the Cytoplasmic side of the membrane. Ser-2 and Ser-23 each carry phosphoserine. Residues 195 to 257 (QNLIEQRDQE…QLASDELRKA (63 aa)) form the t-SNARE coiled-coil homology domain. The helical; Anchor for type IV membrane protein transmembrane segment at 269–288 (VYLLIVLLVMLLFIFLIMKL) threads the bilayer.

The protein belongs to the syntaxin family. In terms of processing, ubiquitinated.

It localises to the membrane. Its function is as follows. Plays a role in the sorting and targeting of vacuolar proteases. This is Syntaxin PEP12 (PEP12) from Saccharomyces cerevisiae (strain ATCC 204508 / S288c) (Baker's yeast).